A 229-amino-acid polypeptide reads, in one-letter code: Ribonuclease 3 (229 aa).

The 123-residue stretch at 5–127 (LARLERQLGY…LIGAIYLDAG (123 aa)) folds into the RNase III domain. Residue E40 participates in Mg(2+) binding. The active site involves D44. Positions 113 and 116 each coordinate Mg(2+). E116 is an active-site residue. The DRBM domain occupies 154–224 (DPKTRLQEFL…AAAALIALGV (71 aa)).

The protein belongs to the ribonuclease III family. Homodimer. The cofactor is Mg(2+).

Its subcellular location is the cytoplasm. The enzyme catalyses Endonucleolytic cleavage to 5'-phosphomonoester.. Its function is as follows. Digests double-stranded RNA. Involved in the processing of primary rRNA transcript to yield the immediate precursors to the large and small rRNAs (23S and 16S). Processes some mRNAs, and tRNAs when they are encoded in the rRNA operon. Processes pre-crRNA and tracrRNA of type II CRISPR loci if present in the organism. The chain is Ribonuclease 3 from Pseudomonas fluorescens (strain SBW25).